We begin with the raw amino-acid sequence, 71 residues long: MAIQSKYSNTQVESIIAELSAVLDKHQAPTDLRLMVLGNCVTDLLARKVPAEARASVAEQFSKALAQSVKG.

The protein belongs to the UPF0352 family.

The chain is UPF0352 protein Swoo_2786 from Shewanella woodyi (strain ATCC 51908 / MS32).